Here is a 61-residue protein sequence, read N- to C-terminus: Probable tautomerase spyM18_1099 (61 aa).

Pro2 functions as the Proton acceptor; via imino nitrogen in the catalytic mechanism.

This sequence belongs to the 4-oxalocrotonate tautomerase family.

In Streptococcus pyogenes serotype M18 (strain MGAS8232), this protein is Probable tautomerase spyM18_1099.